A 440-amino-acid chain; its full sequence is WAS/WASL-interacting protein family member 2 (440 aa).

A compositionally biased stretch (pro residues) spans 1-18 (MPIPPPPPPPPGPPPPPT). Residues 1 to 38 (MPIPPPPPPPPGPPPPPTFNQANTEQPKLSRDEQRNRG) are disordered. Residues 36–53 (NRGALLQDICKGTKLKKV) form the WH2 domain. Arginine 37 carries the post-translational modification Asymmetric dimethylarginine. The binds actin stretch occupies residues 49–52 (KLKK). Disordered regions lie at residues 56–386 (VNDR…RDSI) and 419–440 (RVYP…PILR). Residues 116-132 (PSSRAAAPRPPGSAASG) are compositionally biased toward low complexity. Composition is skewed to pro residues over residues 176–193 (APPP…PTPL), 225–236 (PAPPPVKPPPSP), 249–262 (APPP…PGVP), and 356–378 (RGKP…PPPL).

Belongs to the verprolin family. In terms of assembly, interacts with WASL and WASP, and this interaction results in cytoplasmic relocation of these two proteins along actin filaments. Interacts with NCK2 resulting in the localization to sites of focal adhesions.

It is found in the cytoplasm. Its subcellular location is the cytoskeleton. Its function is as follows. Plays an active role in the formation of cell surface protrusions downstream of activated PDGFB receptors. Plays an important role in actin-microspike formation through cooperation with WASL. May cooperate with WASP and WASL to induce mobilization and reorganization of the actin filament system. This is WAS/WASL-interacting protein family member 2 (Wipf2) from Mus musculus (Mouse).